Reading from the N-terminus, the 532-residue chain is Telomerase Cajal body protein 1 (532 aa).

The interval 1-48 (MKTSEELRLAPDSLPSDLVPAPVLQASPADKNTDSEPVPPPCGGDDQL) is disordered. Phosphoserine occurs at positions 27, 61, and 83. The disordered stretch occupies residues 83 to 115 (SPRIEEQEVPENASLPVEETNRPELESGEAMEG). WD repeat units lie at residues 151 to 190 (RSEN…YSES), 206 to 251 (EGDT…LRAS), 256 to 297 (NHLD…RDCE), 307 to 348 (GQSG…ALLG), 349 to 389 (GHQG…HLLW), and 395 to 434 (VTTN…SDCK). T474 is subject to Phosphothreonine. S476 bears the Phosphoserine mark. The segment at 505–532 (CGGGPDPSNPDEDQDEKGQGRTEAVGMS) is disordered.

The protein belongs to the TCAB1 family. Component of the telomerase holoenzyme complex composed of one molecule of TERT, one molecule of WRAP53/TCAB1, two molecules of H/ACA ribonucleoprotein complex subunits DKC1, NOP10, NHP2 and GAR1, and a telomerase RNA template component (TERC). The telomerase holoenzyme complex is associated with TEP1, SMG6/EST1A and POT1. Interacts with the chaperonin-containing T-complex (TRiC) complex; which mediates the folding of WRAP53/TCAB1. Interacts with COIL. Interacts with SMN1. Interacts with RNF8. Interacts with histone H2AX. Phosphorylated at Ser-61 by ATM in response to DNA damage, promoting its interaction with histone H2AX and localization to sites of DNA double-strand breaks.

Its subcellular location is the nucleus. The protein resides in the cajal body. The protein localises to the chromosome. It is found in the telomere. In terms of biological role, RNA chaperone that plays a key role in telomere maintenance and RNA localization to Cajal bodies. Specifically recognizes and binds the Cajal body box (CAB box) present in both small Cajal body RNAs (scaRNAs) and telomerase RNA template component (TERC). Essential component of the telomerase holoenzyme complex, a ribonucleoprotein complex essential for the replication of chromosome termini that elongates telomeres in most eukaryotes. In the telomerase holoenzyme complex, required to stimulate the catalytic activity of the complex. Acts by specifically binding the CAB box of the TERC RNA and controlling the folding of the CR4/CR5 region of the TERC RNA, a critical step for telomerase activity. In addition, also controls telomerase holoenzyme complex localization to Cajal body. During S phase, required for delivery of TERC to telomeres during S phase and for telomerase activity. In addition to its role in telomere maintenance, also required for Cajal body formation, probably by mediating localization of scaRNAs to Cajal bodies. Also plays a role in DNA repair: phosphorylated by ATM in response to DNA damage and relocalizes to sites of DNA double-strand breaks to promote the repair of DNA double-strand breaks. Acts by recruiting the ubiquitin ligase RNF8 to DNA breaks and promote both homologous recombination (HR) and non-homologous end joining (NHEJ). The polypeptide is Telomerase Cajal body protein 1 (Rattus norvegicus (Rat)).